Consider the following 218-residue polypeptide: Guanylate kinase (218 aa).

The Guanylate kinase-like domain maps to 17 to 196 (GVLLALSSPS…ALEKLNEILH (180 aa)). 24-31 (SPSGAGKT) is a binding site for ATP.

The protein belongs to the guanylate kinase family.

The protein localises to the cytoplasm. It carries out the reaction GMP + ATP = GDP + ADP. Functionally, essential for recycling GMP and indirectly, cGMP. This is Guanylate kinase from Maricaulis maris (strain MCS10) (Caulobacter maris).